We begin with the raw amino-acid sequence, 721 residues long: Polyphosphate kinase (721 aa).

An ATP-binding site is contributed by Asn47. Arg377 and Arg407 together coordinate Mg(2+). His437 functions as the Phosphohistidine intermediate in the catalytic mechanism. Residues Tyr471, Arg567, and His595 each contribute to the ATP site.

This sequence belongs to the polyphosphate kinase 1 (PPK1) family. Requires Mg(2+) as cofactor. In terms of processing, an intermediate of this reaction is the autophosphorylated ppk in which a phosphate is covalently linked to a histidine residue through a N-P bond.

It carries out the reaction [phosphate](n) + ATP = [phosphate](n+1) + ADP. Catalyzes the reversible transfer of the terminal phosphate of ATP to form a long-chain polyphosphate (polyP). The protein is Polyphosphate kinase of Exiguobacterium sp. (strain ATCC BAA-1283 / AT1b).